Consider the following 341-residue polypeptide: GTP 3',8-cyclase (341 aa).

The Radical SAM core domain occupies 11-231 (QKSRPLRDLR…RIINEDMPIE (221 aa)). R20 contributes to the GTP binding site. Positions 27 and 31 each coordinate [4Fe-4S] cluster. Residue Y33 coordinates S-adenosyl-L-methionine. C34 serves as a coordination point for [4Fe-4S] cluster. R75 serves as a coordination point for GTP. G79 serves as a coordination point for S-adenosyl-L-methionine. GTP is bound at residue T106. Residue S130 participates in S-adenosyl-L-methionine binding. K167 contributes to the GTP binding site. M201 is a binding site for S-adenosyl-L-methionine. [4Fe-4S] cluster contacts are provided by C265 and C268. 270–272 (RAR) provides a ligand contact to GTP. C282 contributes to the [4Fe-4S] cluster binding site.

The protein belongs to the radical SAM superfamily. MoaA family. Monomer and homodimer. Requires [4Fe-4S] cluster as cofactor.

The enzyme catalyses GTP + AH2 + S-adenosyl-L-methionine = (8S)-3',8-cyclo-7,8-dihydroguanosine 5'-triphosphate + 5'-deoxyadenosine + L-methionine + A + H(+). It participates in cofactor biosynthesis; molybdopterin biosynthesis. In terms of biological role, catalyzes the cyclization of GTP to (8S)-3',8-cyclo-7,8-dihydroguanosine 5'-triphosphate. The polypeptide is GTP 3',8-cyclase (Bacillus licheniformis (strain ATCC 14580 / DSM 13 / JCM 2505 / CCUG 7422 / NBRC 12200 / NCIMB 9375 / NCTC 10341 / NRRL NRS-1264 / Gibson 46)).